The following is a 324-amino-acid chain: Lactonase drp35 (324 aa).

The Ca(2+) site is built by Glu-47, Ser-109, Gly-111, Asp-129, Thr-132, Tyr-134, Asp-137, Asn-184, Asp-235, and Ser-236. Asp-235 serves as the catalytic Proton donor.

Belongs to the SMP-30/CGR1 family. The cofactor is Ca(2+).

The protein localises to the cytoplasm. In terms of biological role, exhibits lactonase activity. Acts in cells with perturbed membrane integrity and is possibly related to the membrane homeostasis. This chain is Lactonase drp35 (drp35), found in Staphylococcus aureus (strain MRSA252).